The primary structure comprises 267 residues: Phosphatidylserine decarboxylase proenzyme (267 aa).

Active-site charge relay system; for autoendoproteolytic cleavage activity residues include Asp78, His132, and Ser236. Ser236 functions as the Schiff-base intermediate with substrate; via pyruvic acid; for decarboxylase activity in the catalytic mechanism. At Ser236 the chain carries Pyruvic acid (Ser); by autocatalysis.

Belongs to the phosphatidylserine decarboxylase family. PSD-B subfamily. Prokaryotic type I sub-subfamily. As to quaternary structure, heterodimer of a large membrane-associated beta subunit and a small pyruvoyl-containing alpha subunit. Requires pyruvate as cofactor. Is synthesized initially as an inactive proenzyme. Formation of the active enzyme involves a self-maturation process in which the active site pyruvoyl group is generated from an internal serine residue via an autocatalytic post-translational modification. Two non-identical subunits are generated from the proenzyme in this reaction, and the pyruvate is formed at the N-terminus of the alpha chain, which is derived from the carboxyl end of the proenzyme. The autoendoproteolytic cleavage occurs by a canonical serine protease mechanism, in which the side chain hydroxyl group of the serine supplies its oxygen atom to form the C-terminus of the beta chain, while the remainder of the serine residue undergoes an oxidative deamination to produce ammonia and the pyruvoyl prosthetic group on the alpha chain. During this reaction, the Ser that is part of the protease active site of the proenzyme becomes the pyruvoyl prosthetic group, which constitutes an essential element of the active site of the mature decarboxylase.

Its subcellular location is the cell membrane. It carries out the reaction a 1,2-diacyl-sn-glycero-3-phospho-L-serine + H(+) = a 1,2-diacyl-sn-glycero-3-phosphoethanolamine + CO2. Its pathway is phospholipid metabolism; phosphatidylethanolamine biosynthesis; phosphatidylethanolamine from CDP-diacylglycerol: step 2/2. Catalyzes the formation of phosphatidylethanolamine (PtdEtn) from phosphatidylserine (PtdSer). This Helicobacter pylori (strain Shi470) protein is Phosphatidylserine decarboxylase proenzyme.